Here is a 178-residue protein sequence, read N- to C-terminus: tRNA (cytidine(56)-2'-O)-methyltransferase (178 aa).

S-adenosyl-L-methionine is bound by residues L84, 112 to 116 (GAEKV), and 130 to 137 (VGNQPHSE).

Belongs to the aTrm56 family. In terms of assembly, homodimer.

It localises to the cytoplasm. It catalyses the reaction cytidine(56) in tRNA + S-adenosyl-L-methionine = 2'-O-methylcytidine(56) in tRNA + S-adenosyl-L-homocysteine + H(+). Functionally, specifically catalyzes the AdoMet-dependent 2'-O-ribose methylation of cytidine at position 56 in tRNAs. The polypeptide is tRNA (cytidine(56)-2'-O)-methyltransferase (Methanocella arvoryzae (strain DSM 22066 / NBRC 105507 / MRE50)).